Consider the following 283-residue polypeptide: MAPSPTKRRERSEDKPRERGKEKAPAKEGAEKERGRDKIRKRRSNSTGSSSSRSSSSSSSSSGSSSGSSSGSSSSSGSSRSGSSSSSRSSSSSGSSGSPSPSRRRHDNRRRSRSKSKSQKRTDEKERKRRSPSPKPTKLYLGRLTRNVTKDHIQEIFATYGKIKMIDMPSDRLHPNVSKGYAYVEYESPEDAQKALKHMDGGQIDGQEITATAILAQRIRPAPRRLSPPRRMPPPPPMWRRTPPRMRRRSRSPRRRSPVRRRSRSRSPGRRRHRSRSSSNSSR.

2 disordered regions span residues 1–141 and 217–283; these read MAPS…KLYL and QRIR…NSSR. A compositionally biased stretch (basic and acidic residues) spans 10–36; the sequence is ERSEDKPRERGKEKAPAKEGAEKERGR. Positions 45–101 are enriched in low complexity; sequence NSTGSSSSRSSSSSSSSSGSSSGSSSGSSSSSGSSRSGSSSSSRSSSSSGSSGSPSP. Residues 102–119 show a composition bias toward basic residues; that stretch reads SRRRHDNRRRSRSKSKSQ. The 80-residue stretch at 137 to 216 folds into the RRM domain; that stretch reads TKLYLGRLTR…QEITATAILA (80 aa). Over residues 242–276 the composition is skewed to basic residues; it reads TPPRMRRRSRSPRRRSPVRRRSRSRSPGRRRHRSR.

Belongs to the splicing factor SR family. In terms of assembly, component of the active spliceosome.

The protein localises to the nucleus. It is found in the nucleus speckle. It localises to the cytoplasm. Functionally, component of a splicing-dependent multiprotein exon junction complex (EJC) deposited at splice junction on mRNAs. The EJC is a dynamic structure consisting of a few core proteins and several more peripheral nuclear and cytoplasmic associated factors that join the complex only transiently either during EJC assembly or during subsequent mRNA metabolism. Putative component of the spliceosome which enhances the formation of the ATP-dependent A complex of the spliceosome. May participate in mRNA 3'-end cleavage. Also mediates increase of mRNA abundance and translational efficiency. The chain is RNA-binding protein with serine-rich domain 1 (rnps1) from Danio rerio (Zebrafish).